The chain runs to 301 residues: uncharacterized protein (301 aa).

Belongs to the asfivirus E301R family. Interacts with host IRF3.

Functionally, plays a role in the inhibition of host innate immune system by acting as a negatively regulator of type I interferon production. Mechanistically, interacts with and prevents host IRF3 nuclear localization to inhibit its transcriptional activity. This is an uncharacterized protein from African swine fever virus (isolate Tick/South Africa/Pretoriuskop Pr4/1996) (ASFV).